Reading from the N-terminus, the 82-residue chain is Delta-conotoxin-like SmVIA (82 aa).

The first 22 residues, Met1 to Ala22, serve as a signal peptide directing secretion. The propeptide occupies Asp23–Asn49. Disulfide bonds link Cys54–Cys69, Cys61–Cys73, and Cys68–Cys77. Pro65 is subject to 4-hydroxyproline.

This sequence belongs to the conotoxin O1 superfamily. As to expression, expressed by the venom duct.

The protein resides in the secreted. Functionally, delta-conotoxins bind to site 6 of voltage-gated sodium channels (Nav) and inhibit the inactivation process. The sequence is that of Delta-conotoxin-like SmVIA from Conus stercusmuscarum (Fly-specked cone).